We begin with the raw amino-acid sequence, 107 residues long: Large ribosomal subunit protein uL24 (107 aa).

Belongs to the universal ribosomal protein uL24 family. In terms of assembly, part of the 50S ribosomal subunit.

Its function is as follows. One of two assembly initiator proteins, it binds directly to the 5'-end of the 23S rRNA, where it nucleates assembly of the 50S subunit. In terms of biological role, one of the proteins that surrounds the polypeptide exit tunnel on the outside of the subunit. The polypeptide is Large ribosomal subunit protein uL24 (Nitrosomonas eutropha (strain DSM 101675 / C91 / Nm57)).